The chain runs to 107 residues: uncharacterized protein (107 aa).

This is an uncharacterized protein from Dictyostelium discoideum (Social amoeba).